The chain runs to 659 residues: A-type ATP synthase subunit I (659 aa).

Transmembrane regions (helical) follow at residues 376–396, 415–435, 460–480, 489–509, 513–533, 542–562, 566–586, and 590–610; these read FFFG…VISA, IMLW…SYCG, VMAL…GFIV, AAIL…LFAL, LGIP…LFVV, MAVL…LSYA, ALAL…NMVW, and IGPI…GHIF.

Belongs to the V-ATPase 116 kDa subunit family. In terms of assembly, has multiple subunits with at least A(3), B(3), C, D, E, F, H, I and proteolipid K(x).

It localises to the cell membrane. Its function is as follows. Component of the A-type ATP synthase that produces ATP from ADP in the presence of a proton gradient across the membrane. This Pyrococcus abyssi (strain GE5 / Orsay) protein is A-type ATP synthase subunit I.